A 240-amino-acid polypeptide reads, in one-letter code: 4-hydroxy-tetrahydrodipicolinate reductase (240 aa).

7-12 (GLSGTM) is a binding site for NAD(+). Lys-35 provides a ligand contact to NADP(+). NAD(+) contacts are provided by residues 74–76 (GTT) and 98–101 (ATNM). His-131 serves as the catalytic Proton donor/acceptor. His-132 serves as a coordination point for (S)-2,3,4,5-tetrahydrodipicolinate. Residue Lys-135 is the Proton donor of the active site. 141–142 (GS) provides a ligand contact to (S)-2,3,4,5-tetrahydrodipicolinate.

It belongs to the DapB family.

The protein resides in the cytoplasm. It catalyses the reaction (S)-2,3,4,5-tetrahydrodipicolinate + NAD(+) + H2O = (2S,4S)-4-hydroxy-2,3,4,5-tetrahydrodipicolinate + NADH + H(+). It carries out the reaction (S)-2,3,4,5-tetrahydrodipicolinate + NADP(+) + H2O = (2S,4S)-4-hydroxy-2,3,4,5-tetrahydrodipicolinate + NADPH + H(+). It participates in amino-acid biosynthesis; L-lysine biosynthesis via DAP pathway; (S)-tetrahydrodipicolinate from L-aspartate: step 4/4. In terms of biological role, catalyzes the conversion of 4-hydroxy-tetrahydrodipicolinate (HTPA) to tetrahydrodipicolinate. This chain is 4-hydroxy-tetrahydrodipicolinate reductase, found in Alkaliphilus metalliredigens (strain QYMF).